We begin with the raw amino-acid sequence, 574 residues long: MAATAMRMIISIIFISTYMTHITLCQNITEEFYQSTCSAVSRGYLSALRTGWYTSVVTIELSKIQKNVCKSTDSKVKLIKQELERYNNAVIELQSLMQNEPASFSRAKRGIPELIHYTRNSTKRFYGLMGKKRKRRFLGFLLGIGSAIASGVAVSKVLHLEGEVNKIKNALLSTNKAVVSLSNGVSVLTSKVLDLKNYIDKELLPKVNNHDCRISNIETVIEFQQKNNRLLEIAREFSVNAGITTPLSTYMLTNSELLSLINDMPITNDQKKLMSSNVQIVRQQSYSIMSVVKEEVIAYVVQLPIYGVIDTPCWKLHTSPLCTTDNKEGSNICLTRTDRGWYCDNAGSVSFFPQAETCKVQSNRVFCDTMNSLTLPTDVNLCNTDIFNTKYDCKIMTSKTDISSSVITSIGAIVSCYGKTKCTASNKNRGIIKTFSNGCDYVSNKGVDTVSVGNTLYYVNKLEGKALYIKGEPIINYYDPLVFPSDEFDASIAQVNAKINQSLAFIRRSDELLHSVDVGKSTTNVVITTIIIVIVVVILMLIAVGLLFYCKTRSTPIMLGKDQLSGINNLSFSK.

Positions 1–25 are cleaved as a signal peptide; the sequence is MAATAMRMIISIIFISTYMTHITLC. Over 26 to 524 the chain is Extracellular; sequence QNITEEFYQS…SVDVGKSTTN (499 aa). Asn-27 carries N-linked (GlcNAc...) asparagine; by host glycosylation. 7 disulfide bridges follow: Cys-37–Cys-439, Cys-69–Cys-212, Cys-313–Cys-343, Cys-322–Cys-333, Cys-358–Cys-367, Cys-382–Cys-393, and Cys-416–Cys-422. Residues 76-96 are a coiled coil; the sequence is VKLIKQELERYNNAVIELQSL. N-linked (GlcNAc...) asparagine; by host glycosylation occurs at Asn-120. The interval 137–157 is fusion peptide; the sequence is FLGFLLGIGSAIASGVAVSKV. Residues 158-209 adopt a coiled-coil conformation; sequence LHLEGEVNKIKNALLSTNKAVVSLSNGVSVLTSKVLDLKNYIDKELLPKVNN. Residues 481 to 516 are a coiled coil; the sequence is LVFPSDEFDASIAQVNAKINQSLAFIRRSDELLHSV. Asn-500 carries N-linked (GlcNAc...) asparagine; by host glycosylation. Residues 525–550 traverse the membrane as a helical segment; it reads VVITTIIIVIVVVILMLIAVGLLFYC. A lipid anchor (S-palmitoyl cysteine; by host) is attached at Cys-550. Over 551–574 the chain is Cytoplasmic; sequence KTRSTPIMLGKDQLSGINNLSFSK.

It belongs to the paramyxoviruses fusion glycoprotein family. As to quaternary structure, homotrimer. Heterodimer with fusion protein F2; disulfide-linked. Part of a complex composed of F1, F2 and G glycoproteins. As a heterodimer with F2, interacts with host RHOA; this interaction facilitates virus-induced syncytium formation. In terms of assembly, homotrimer. Heterodimer with fusion protein F1; disulfide-linked. Part of a complex composed of F1, F2 and G glycoproteins. As a heterodimer with F1, interacts with host RHOA; this interaction facilitates virus-induced syncytium formation. Post-translationally, the F glycoprotein is synthesized as a F0 inactive precursor that is heavily N-glycosylated and processed at two sites by a host furin-like protease probably in the Golgi. The cleavage site between p27 and F1 may occur after endocytosis to yield the mature F1 and F2 proteins. Both cleavages are required for membrane fusion and p27 is released from the processed protein.

It is found in the host Golgi apparatus membrane. It localises to the virion membrane. The protein resides in the host cell membrane. Functionally, inactive precursor that is cleaved at two sites by a furin-like protease to give rise to the mature F1 and F2 fusion glycoproteins. Its function is as follows. Class I viral fusion protein. Under the current model, the protein has at least 3 conformational states: pre-fusion native state, pre-hairpin intermediate state, and post-fusion hairpin state. During viral and plasma cell membrane fusion, the coiled coil regions assume a trimer-of-hairpins structure, positioning the fusion peptide in close proximity to the C-terminal region of the ectodomain. The formation of this structure appears to drive apposition and subsequent fusion of viral and cellular membranes leading to delivery of the nucleocapsid into the cytoplasm. This fusion is pH independent and occurs at the plasma or endosomal membrane. The trimer of F1-F2 (F protein) also facilitates the attachment and entry into the host cell. Later in infection, F protein expressed at the plasma membrane of infected cells can mediate fusion with adjacent cells to form syncytia, a cytopathic effect that could lead to tissue necrosis. Major determinant of the species specificity of RSV infection. The trimer of F1-F2 (F protein) also facilitates the attachment and entry into the host cell. Later in infection, F protein expressed at the plasma membrane of infected cells can mediate fusion with adjacent cells to form syncytia, a cytopathic effect that could lead to tissue necrosis. This chain is Fusion glycoprotein F0 (F), found in Bovine respiratory syncytial virus (strain Copenhagen) (BRS).